Reading from the N-terminus, the 643-residue chain is Phosphomethylpyrimidine synthase (643 aa).

Residues Asn248, Met277, Tyr306, His342, 362 to 364, 403 to 406, and Glu442 each bind substrate; these read SRG and DGLR. His446 is a Zn(2+) binding site. Tyr469 is a substrate binding site. His510 is a binding site for Zn(2+). [4Fe-4S] cluster-binding residues include Cys590, Cys593, and Cys598.

The protein belongs to the ThiC family. Homodimer. It depends on [4Fe-4S] cluster as a cofactor.

It carries out the reaction 5-amino-1-(5-phospho-beta-D-ribosyl)imidazole + S-adenosyl-L-methionine = 4-amino-2-methyl-5-(phosphooxymethyl)pyrimidine + CO + 5'-deoxyadenosine + formate + L-methionine + 3 H(+). It participates in cofactor biosynthesis; thiamine diphosphate biosynthesis. Catalyzes the synthesis of the hydroxymethylpyrimidine phosphate (HMP-P) moiety of thiamine from aminoimidazole ribotide (AIR) in a radical S-adenosyl-L-methionine (SAM)-dependent reaction. The chain is Phosphomethylpyrimidine synthase from Paraburkholderia xenovorans (strain LB400).